The chain runs to 222 residues: Pyrrolidone-carboxylate peptidase (222 aa).

Active-site residues include Glu80, Cys146, and His170.

This sequence belongs to the peptidase C15 family. In terms of assembly, homotetramer.

The protein localises to the cytoplasm. The catalysed reaction is Release of an N-terminal pyroglutamyl group from a polypeptide, the second amino acid generally not being Pro.. Functionally, removes 5-oxoproline from various penultimate amino acid residues except L-proline. The polypeptide is Pyrrolidone-carboxylate peptidase (Mycobacterium tuberculosis (strain ATCC 25177 / H37Ra)).